We begin with the raw amino-acid sequence, 579 residues long: YTH domain-containing family protein 2 (579 aa).

The segment at 1–45 (MSASSLLEQRPKGQGNKVQNGSVHQKDGLNDDDFEPYLSPQARPN) is disordered. S2 is modified (N-acetylserine). Phosphoserine occurs at positions 2, 4, 5, 22, 39, and 196. Residues 2–384 (SASSLLEQRP…QAGSGSTPSE (383 aa)) are localization to mRNA processing bodies (P-bodies). A disordered region spans residues 247–387 (AKQQPKLKTK…SGSTPSEPHP (141 aa)). Over residues 291–316 (ALVQNIGQPTQGSPQPVGQQANNSPP) the composition is skewed to polar residues. The segment covering 337-349 (AQLSVQQQAAQPT) has biased composition (low complexity). S359 is modified (phosphoserine). The span at 359 to 371 (SGFGHNGVDGNGV) shows a compositional bias: gly residues. Residues 372 to 383 (GQSQAGSGSTPS) are compositionally biased toward polar residues. The interval 385-579 (PHPVLEKLRS…VKKERQGRGK (195 aa)) is interaction with m6A-containing mRNAs. S394 is modified (phosphoserine). The YTH domain maps to 410–544 (GRVFIIKSYS…EKAKQVLKII (135 aa)). Residues 416–418 (KSY), D422, 432–433 (WC), N462, W486, and W491 contribute to the RNA site.

It belongs to the YTHDF family. YTHDF2 subfamily. In terms of assembly, interacts with CNOT1; interaction is direct and promotes recruitment of the CCR4-NOT complex. Interacts with YTHDF3. Interacts with RIDA/HRSP12; interaction leads to recruitment of the ribonuclease P/MRP complex. Ubiquitinated by the SCF(SKP2) complex, leading to its degradation. In terms of tissue distribution, widely expressed, with highest expression in testis.

The protein localises to the cytoplasm. The protein resides in the cytosol. It is found in the P-body. It localises to the stress granule. Its subcellular location is the nucleus. Functionally, specifically recognizes and binds N6-methyladenosine (m6A)-containing RNAs, and regulates their stability. M6A is a modification present at internal sites of mRNAs and some non-coding RNAs and plays a role in mRNA stability and processing. Acts as a regulator of mRNA stability by promoting degradation of m6A-containing mRNAs via interaction with the CCR4-NOT and ribonuclease P/MRP complexes, depending on the context. The YTHDF paralogs (YTHDF1, YTHDF2 and YTHDF3) share m6A-containing mRNAs targets and act redundantly to mediate mRNA degradation and cellular differentiation. M6A-containing mRNAs containing a binding site for RIDA/HRSP12 (5'-GGUUC-3') are preferentially degraded by endoribonucleolytic cleavage: cooperative binding of RIDA/HRSP12 and YTHDF2 to transcripts leads to recruitment of the ribonuclease P/MRP complex. Other m6A-containing mRNAs undergo deadenylation via direct interaction between YTHDF2 and CNOT1, leading to recruitment of the CCR4-NOT and subsequent deadenylation of m6A-containing mRNAs. Required maternally to regulate oocyte maturation: probably acts by binding to m6A-containing mRNAs, thereby regulating maternal transcript dosage during oocyte maturation, which is essential for the competence of oocytes to sustain early zygotic development. Also required during spermatogenesis: regulates spermagonial adhesion by promoting degradation of m6A-containing transcripts coding for matrix metallopeptidases. Also involved in hematopoietic stem cells specification by binding to m6A-containing mRNAs, leading to promote their degradation. Also acts as a regulator of neural development by promoting m6A-dependent degradation of neural development-related mRNA targets. Inhibits neural specification of induced pluripotent stem cells by binding to methylated neural-specific mRNAs and promoting their degradation, thereby restraining neural differentiation. Regulates circadian regulation of hepatic lipid metabolism: acts by promoting m6A-dependent degradation of PPARA transcripts. Regulates the innate immune response to infection by inhibiting the type I interferon response: acts by binding to m6A-containing IFNB transcripts and promoting their degradation. May also act as a promoter of cap-independent mRNA translation following heat shock stress: upon stress, relocalizes to the nucleus and specifically binds mRNAs with some m6A methylation mark at their 5'-UTR, protecting demethylation of mRNAs by FTO, thereby promoting cap-independent mRNA translation. Regulates mitotic entry by promoting the phase-specific m6A-dependent degradation of WEE1 transcripts. Promotes formation of phase-separated membraneless compartments, such as P-bodies or stress granules, by undergoing liquid-liquid phase separation upon binding to mRNAs containing multiple m6A-modified residues: polymethylated mRNAs act as a multivalent scaffold for the binding of YTHDF proteins, juxtaposing their disordered regions and thereby leading to phase separation. The resulting mRNA-YTHDF complexes then partition into different endogenous phase-separated membraneless compartments, such as P-bodies, stress granules or neuronal RNA granules. May also recognize and bind RNAs modified by C5-methylcytosine (m5C) and act as a regulator of rRNA processing. The protein is YTH domain-containing family protein 2 of Mus musculus (Mouse).